The following is a 274-amino-acid chain: Large ribosomal subunit protein uL2 (274 aa).

Residues 224–274 (VAMNPVDHPHGGGEGRTSGGRHPVTPWGIPTKGYKTRRNKRSNKLIVQKRK) are disordered. Over residues 257–274 (YKTRRNKRSNKLIVQKRK) the composition is skewed to basic residues.

The protein belongs to the universal ribosomal protein uL2 family. Part of the 50S ribosomal subunit. Forms a bridge to the 30S subunit in the 70S ribosome.

Functionally, one of the primary rRNA binding proteins. Required for association of the 30S and 50S subunits to form the 70S ribosome, for tRNA binding and peptide bond formation. It has been suggested to have peptidyltransferase activity; this is somewhat controversial. Makes several contacts with the 16S rRNA in the 70S ribosome. The chain is Large ribosomal subunit protein uL2 from Francisella tularensis subsp. tularensis (strain FSC 198).